A 198-amino-acid polypeptide reads, in one-letter code: Small ribosomal subunit protein uS4z (198 aa).

Ser68 is modified (phosphoserine). In terms of domain architecture, S4 RNA-binding spans 109-180 (RRLQTIVFKS…PGRVKRRNEK (72 aa)). The tract at residues 163–198 (TSPFGGGRPGRVKRRNEKSASKKASGGGDADGDDEE) is disordered.

This sequence belongs to the universal ribosomal protein uS4 family. Binds to the translation initiation factors TIF3E1.

The polypeptide is Small ribosomal subunit protein uS4z (RPS9B) (Arabidopsis thaliana (Mouse-ear cress)).